Consider the following 451-residue polypeptide: MKVSSLLPSVLLLVGATRASPHPAQPPQQQPLNNIIEESNTQTNPPNKHDLEHVIDTSPLLSLHRDLVKFESISGNEADVGDFLIQYLQARDFKVEKQIVVPKGPKGQGERFNIYAYPNSTPEPRVLLSSHMDTVPPYIPYSLDLPSSNGSTTDSLNWRDNILIAGRGSVDAKASVASQILAVLEYLQLHPEAPLGLLFVVGEEVDGIGMQYFSQSELNTSPPTVHTVIFGEPTELALVSGHKGSLFFKISAKGKAAHSGYPWLGQSAVSALLPALVKLDTLADIPVEDGGIPGSEKLGKSTINIGRIDAGIASNVVPASAEASVNIRLAYHDVEKVKEIVTKAVDEATNGDENVTIEWGNKGKGHAPIDFDTDVDGFKVMTVNYATDAWYLKFHEGSGGSPEGRVHTYLYGPGSIFVAHGADEAITVRDLEDAVSGYKKLIEAAFERNKV.

The first 19 residues, 1–19 (MKVSSLLPSVLLLVGATRA), serve as a signal peptide directing secretion. Residue N149 is glycosylated (N-linked (GlcNAc...) asparagine). D171 contacts Zn(2+). Residue E203 is the Proton acceptor of the active site. Residue E204 coordinates Zn(2+). A glycan (N-linked (GlcNAc...) asparagine) is linked at N354.

It belongs to the peptidase M20A family. Zn(2+) serves as cofactor.

It is found in the secreted. In Talaromyces marneffei (strain ATCC 18224 / CBS 334.59 / QM 7333) (Penicillium marneffei), this protein is Probable carboxypeptidase PMAA_093910.